Here is a 177-residue protein sequence, read N- to C-terminus: Large ribosomal subunit protein uL6 (177 aa).

This sequence belongs to the universal ribosomal protein uL6 family. Part of the 50S ribosomal subunit.

Its function is as follows. This protein binds to the 23S rRNA, and is important in its secondary structure. It is located near the subunit interface in the base of the L7/L12 stalk, and near the tRNA binding site of the peptidyltransferase center. The sequence is that of Large ribosomal subunit protein uL6 from Rickettsia massiliae (strain Mtu5).